The primary structure comprises 94 residues: NADH-ubiquinone oxidoreductase 10.5 kDa subunit (94 aa).

This sequence belongs to the complex I NDUFA2 subunit family. As to quaternary structure, complex I is composed of about 40 different subunits.

The protein localises to the mitochondrion inner membrane. Accessory subunit of the mitochondrial membrane respiratory chain NADH dehydrogenase (Complex I), that is believed not to be involved in catalysis. Complex I functions in the transfer of electrons from NADH to the respiratory chain. The immediate electron acceptor for the enzyme is believed to be ubiquinone. This Neurospora crassa (strain ATCC 24698 / 74-OR23-1A / CBS 708.71 / DSM 1257 / FGSC 987) protein is NADH-ubiquinone oxidoreductase 10.5 kDa subunit (nuo-10.5).